Here is an 830-residue protein sequence, read N- to C-terminus: Prolactin receptor (830 aa).

Residues 1-23 (MKQKLRSSVQIILLFALTAVGLT) form the signal peptide. Residues 24–439 (GQSYPGKPKI…QIPTDFRIKD (416 aa)) are Extracellular-facing. 4 Fibronectin type-III domains span residues 30 to 128 (KPKI…VQPD), 129 to 228 (APVN…IPNG), 231 to 331 (PPEK…IVQT), and 333 to 434 (PPVN…IPTD). C36 and C46 are oxidised to a cystine. N59 is a glycosylation site (N-linked (GlcNAc...) asparagine). A disulfide bridge connects residues C75 and C86. 8 N-linked (GlcNAc...) asparagine glycosylation sites follow: N91, N100, N112, N132, N263, N304, N316, and N336. Residues D415 and H417 each coordinate Zn(2+). The WSXWS motif signature appears at 420–424 (WSEWS). Residues 440 to 460 (MVVWIIVGVLSSLICLVMSWT) form a helical membrane-spanning segment. The Cytoplasmic segment spans residues 461-830 (MVLKGYRMIA…DPSSFIPAFK (370 aa)). Positions 472–480 (ILPPVPGPK) match the Box 1 motif motif.

Belongs to the type I cytokine receptor family. Type 1 subfamily.

The protein resides in the membrane. In terms of biological role, this is a receptor for the anterior pituitary hormone prolactin. This Columba livia (Rock dove) protein is Prolactin receptor (PRLR).